Reading from the N-terminus, the 856-residue chain is DNA mismatch repair protein MutS (856 aa).

600 to 607 (GPNMSGKS) is an ATP binding site.

The protein belongs to the DNA mismatch repair MutS family.

Its function is as follows. This protein is involved in the repair of mismatches in DNA. It is possible that it carries out the mismatch recognition step. This protein has a weak ATPase activity. This Lactobacillus acidophilus (strain ATCC 700396 / NCK56 / N2 / NCFM) protein is DNA mismatch repair protein MutS.